The primary structure comprises 242 residues: MEKAYKILSVQENISHKKAKALIDSGLVSIGGKKLMVARKELPKNTHFSVQKVEKPSVIFEDENILALFKPPFIESYDLASFFKGWALLHRLDKETSGVVLLVKENSEFHLKAKKAFKDRAVKKEYLALTQGIIEEEREINAPILTFKTTKAFSKISKKGQEAVTIITPLKIINKKTLLKVGIKTGRTHQIRVHLKHINHPIIGDTLYNNEPSLAKRLMLHAHKIALLGYEFEAIAPKEFEI.

Positions 2-62 (EKAYKILSVQ…VEKPSVIFED (61 aa)) constitute an S4 RNA-binding domain. Asp-93 is a catalytic residue.

It belongs to the pseudouridine synthase RluA family.

The catalysed reaction is a uridine in RNA = a pseudouridine in RNA. This is an uncharacterized protein from Helicobacter pylori (strain ATCC 700392 / 26695) (Campylobacter pylori).